A 243-amino-acid chain; its full sequence is Small ribosomal subunit protein uS3 (243 aa).

The KH type-2 domain occupies 39-107 (MRKFVMSELK…ETHLNIVEVR (69 aa)). Residues 214–243 (ASERRAMEGDAQGPASRDRDRDRDRRRDNA) are disordered. Residues 229 to 243 (SRDRDRDRDRRRDNA) show a composition bias toward basic and acidic residues.

This sequence belongs to the universal ribosomal protein uS3 family. Part of the 30S ribosomal subunit. Forms a tight complex with proteins S10 and S14.

In terms of biological role, binds the lower part of the 30S subunit head. Binds mRNA in the 70S ribosome, positioning it for translation. In Rhizobium johnstonii (strain DSM 114642 / LMG 32736 / 3841) (Rhizobium leguminosarum bv. viciae), this protein is Small ribosomal subunit protein uS3.